A 491-amino-acid chain; its full sequence is Glutamyl-tRNA(Gln) amidotransferase subunit A (491 aa).

Residues lysine 76 and serine 154 each act as charge relay system in the active site. Serine 178 (acyl-ester intermediate) is an active-site residue.

Belongs to the amidase family. GatA subfamily. Heterotrimer of A, B and C subunits.

The catalysed reaction is L-glutamyl-tRNA(Gln) + L-glutamine + ATP + H2O = L-glutaminyl-tRNA(Gln) + L-glutamate + ADP + phosphate + H(+). Its function is as follows. Allows the formation of correctly charged Gln-tRNA(Gln) through the transamidation of misacylated Glu-tRNA(Gln) in organisms which lack glutaminyl-tRNA synthetase. The reaction takes place in the presence of glutamine and ATP through an activated gamma-phospho-Glu-tRNA(Gln). The protein is Glutamyl-tRNA(Gln) amidotransferase subunit A of Cereibacter sphaeroides (strain ATCC 17023 / DSM 158 / JCM 6121 / CCUG 31486 / LMG 2827 / NBRC 12203 / NCIMB 8253 / ATH 2.4.1.) (Rhodobacter sphaeroides).